The chain runs to 232 residues: MSANMHIFENPSALAEALADDVGARLAAAIAARGTASLAVSGGSTPKAFFRSLSRRELDWSKVTVTLVDERFVPPENDRSNHRLVADNLLKDGAAEARFVPLYQAAETAEAAAAIASGRTASLGAPLDVVVLGMGTDGHTASFFPGGTRLEEALDPTTPRGVITMEAEGAGEPRLTFTFSSLQDAGYLVLHIEGSGKKEVLAQAEASGDEAEMPIRAMLRRAASPLQIYWAP.

The protein belongs to the glucosamine/galactosamine-6-phosphate isomerase family. 6-phosphogluconolactonase subfamily.

The enzyme catalyses 6-phospho-D-glucono-1,5-lactone + H2O = 6-phospho-D-gluconate + H(+). It participates in carbohydrate degradation; pentose phosphate pathway; D-ribulose 5-phosphate from D-glucose 6-phosphate (oxidative stage): step 2/3. In terms of biological role, hydrolysis of 6-phosphogluconolactone to 6-phosphogluconate. This Rhizobium meliloti (strain 1021) (Ensifer meliloti) protein is 6-phosphogluconolactonase (pgl).